The chain runs to 136 residues: uncharacterized protein (136 aa).

As to expression, widely expressed.

This is an uncharacterized protein from Homo sapiens (Human).